A 326-amino-acid polypeptide reads, in one-letter code: Phospho-N-acetylmuramoyl-pentapeptide-transferase (326 aa).

Helical transmembrane passes span 3-23 (ISIS…PAFI), 51-71 (TMGG…VALF), 79-99 (VGMI…DDFL), 115-135 (LALQ…GGDM), 138-158 (VFGY…FWLV), 169-189 (GIDG…GVIA), 195-215 (MDIL…FVFN), 221-243 (VFMG…MALH), and 306-326 (FFFW…LYLM).

The protein belongs to the glycosyltransferase 4 family. MraY subfamily. The cofactor is Mg(2+).

Its subcellular location is the cell membrane. It carries out the reaction UDP-N-acetyl-alpha-D-muramoyl-L-alanyl-gamma-D-glutamyl-L-lysyl-D-alanyl-D-alanine + di-trans,octa-cis-undecaprenyl phosphate = Mur2Ac(oyl-L-Ala-gamma-D-Glu-L-Lys-D-Ala-D-Ala)-di-trans,octa-cis-undecaprenyl diphosphate + UMP. It functions in the pathway cell wall biogenesis; peptidoglycan biosynthesis. In terms of biological role, catalyzes the initial step of the lipid cycle reactions in the biosynthesis of the cell wall peptidoglycan: transfers peptidoglycan precursor phospho-MurNAc-pentapeptide from UDP-MurNAc-pentapeptide onto the lipid carrier undecaprenyl phosphate, yielding undecaprenyl-pyrophosphoryl-MurNAc-pentapeptide, known as lipid I. The polypeptide is Phospho-N-acetylmuramoyl-pentapeptide-transferase (Streptococcus pneumoniae (strain Taiwan19F-14)).